A 1997-amino-acid polypeptide reads, in one-letter code: Otoferlin (1997 aa).

The 98-residue stretch at 1-98 (MALLIHLKTV…VEESHVEVTD (98 aa)) folds into the C2 1 domain. At 1–1963 (MALLIHLKTV…ARYFLWHTYR (1963 aa)) the chain is on the cytoplasmic side. The disordered stretch occupies residues 128–171 (WDDGDFLGDESLQEEEKDSQETDGLLPGSRPSSRPPGEKSFRRA). Positions 129-145 (DDGDFLGDESLQEEEKD) are enriched in acidic residues. 2 consecutive C2 domains span residues 236–357 (KRSK…HKWA) and 400–531 (IEGN…FLPT). The disordered stretch occupies residues 642–694 (NEVDGLSRPQRPRPRKEPGDEEEVDLIQNASDDEAGDAGDLASVSSTPPMRPQ). Positions 660–678 (GDEEEVDLIQNASDDEAGD) are enriched in acidic residues. The stretch at 792–821 (RERLKSCMRELENMGQQARMLRAQVKRHTV) forms a coiled coil. C2 domains are found at residues 944–1069 (LHAF…PPRF) and 1115–1242 (DRGP…PSWN). Aspartate 976, aspartate 982, aspartate 1038, aspartate 1040, and aspartate 1046 together coordinate Ca(2+). Disordered regions lie at residues 1299–1324 (AEEE…PDES) and 1343–1405 (LRQQ…KPKI). Composition is skewed to acidic residues over residues 1314–1324 (EEPEEEEPDES) and 1352–1361 (DLEEKEEVDN). Residues 1370-1383 (KGKEKARAAKEEKK) are compositionally biased toward basic and acidic residues. Low complexity predominate over residues 1387–1396 (QSSGSGQGSE). C2 domains follow at residues 1464–1593 (LPED…ATCG) and 1714–1865 (DMPA…KQCT). Positions 1508, 1514, 1563, 1565, 1571, 1836, 1839, and 1842 each coordinate Ca(2+). The helical transmembrane segment at 1964–1984 (WLLLKLLLLLLLLLLLALFLY) threads the bilayer. Residues 1985–1997 (SVPGYLVKKILGA) are Extracellular-facing.

This sequence belongs to the ferlin family. As to quaternary structure, interacts with SNAP2; the interaction is direct. Interacts with STX1; the interaction is direct. Interacts with RAB8B. Ca(2+) serves as cofactor. In terms of tissue distribution, isoform 1 and isoform 3 are found in adult brain. Isoform 2 is expressed in the fetus and in adult brain, heart, placenta, skeletal muscle and kidney.

The protein resides in the cytoplasmic vesicle. It localises to the secretory vesicle. Its subcellular location is the synaptic vesicle membrane. The protein localises to the basolateral cell membrane. It is found in the endoplasmic reticulum membrane. The protein resides in the golgi apparatus membrane. It localises to the presynaptic cell membrane. Its subcellular location is the cell membrane. In terms of biological role, key calcium ion sensor involved in the Ca(2+)-triggered synaptic vesicle-plasma membrane fusion and in the control of neurotransmitter release at these output synapses. Interacts in a calcium-dependent manner to the presynaptic SNARE proteins at ribbon synapses of cochlear inner hair cells (IHCs) to trigger exocytosis of neurotransmitter. Also essential to synaptic exocytosis in immature outer hair cells (OHCs). May also play a role within the recycling of endosomes. This Homo sapiens (Human) protein is Otoferlin (OTOF).